The chain runs to 101 residues: Small ribosomal subunit protein uS14 (101 aa).

The disordered stretch occupies residues 44–74 (ASRKLSRLPRDSSPVRLRNRDQVDGRPRGYV). Residues 61–70 (RNRDQVDGRP) are compositionally biased toward basic and acidic residues.

Belongs to the universal ribosomal protein uS14 family. In terms of assembly, part of the 30S ribosomal subunit. Contacts proteins S3 and S10.

In terms of biological role, binds 16S rRNA, required for the assembly of 30S particles and may also be responsible for determining the conformation of the 16S rRNA at the A site. The sequence is that of Small ribosomal subunit protein uS14 from Cutibacterium acnes (strain DSM 16379 / KPA171202) (Propionibacterium acnes).